We begin with the raw amino-acid sequence, 210 residues long: MTNLNYQQTHFVMSAPDIRHLPSDTGIEVAFAGRSNAGKSSALNTLTNQKSLARTSKTPGRTQLINLFEVADGKRLVDLPGYGYAEVPEEMKRKWQRALGEYLEKRQSLQGLVVLMDIRHPLKDLDQQMIEWAVDSNIAVLVLLTKADKLASGARKALLNMVREAVLAFNGDVQVETFSSLKKQGVDKLRQKLDTWFSEMQPVEETQDGE.

Residues 25–199 (TGIEVAFAGR…RQKLDTWFSE (175 aa)) enclose the EngB-type G domain. GTP is bound by residues 33–40 (GRSNAGKS), 60–64 (GRTQL), 78–81 (DLPG), 145–148 (TKAD), and 178–180 (FSS). Positions 40 and 62 each coordinate Mg(2+).

Belongs to the TRAFAC class TrmE-Era-EngA-EngB-Septin-like GTPase superfamily. EngB GTPase family. Mg(2+) serves as cofactor.

Necessary for normal cell division and for the maintenance of normal septation. This Shigella flexneri protein is Probable GTP-binding protein EngB.